Here is a 234-residue protein sequence, read N- to C-terminus: Large ribosomal subunit protein uL1 (234 aa).

The protein belongs to the universal ribosomal protein uL1 family. Part of the 50S ribosomal subunit.

Its function is as follows. Binds directly to 23S rRNA. The L1 stalk is quite mobile in the ribosome, and is involved in E site tRNA release. Protein L1 is also a translational repressor protein, it controls the translation of the L11 operon by binding to its mRNA. This is Large ribosomal subunit protein uL1 from Yersinia enterocolitica serotype O:8 / biotype 1B (strain NCTC 13174 / 8081).